A 131-amino-acid chain; its full sequence is Fumarate reductase subunit C (131 aa).

Transmembrane regions (helical) follow at residues 60-80 and 110-130; these read FVGF…LAAA and IKGL…VALF.

This sequence belongs to the FrdC family. Part of an enzyme complex containing four subunits: a flavoprotein (FrdA), an iron-sulfur protein (FrdB), and two hydrophobic anchor proteins (FrdC and FrdD).

The protein localises to the cell inner membrane. Functionally, two distinct, membrane-bound, FAD-containing enzymes are responsible for the catalysis of fumarate and succinate interconversion; fumarate reductase is used in anaerobic growth, and succinate dehydrogenase is used in aerobic growth. Anchors the catalytic components of the fumarate reductase complex to the cell inner membrane, binds quinones. In Enterobacter sp. (strain 638), this protein is Fumarate reductase subunit C.